A 283-amino-acid chain; its full sequence is 5'-nucleotidase SurE (283 aa).

Positions 14, 15, 47, and 105 each coordinate a divalent metal cation.

The protein belongs to the SurE nucleotidase family. A divalent metal cation serves as cofactor.

Its subcellular location is the cytoplasm. It catalyses the reaction a ribonucleoside 5'-phosphate + H2O = a ribonucleoside + phosphate. Its function is as follows. Nucleotidase that shows phosphatase activity on nucleoside 5'-monophosphates. This chain is 5'-nucleotidase SurE, found in Chlamydia trachomatis serovar L2 (strain ATCC VR-902B / DSM 19102 / 434/Bu).